Consider the following 305-residue polypeptide: Mitochondrial thiamine pyrophosphate carrier 1 (305 aa).

Helical transmembrane passes span Val-16–Ala-32, Ile-84–Ile-100, Leu-122–Leu-142, Gly-169–Trp-193, Ile-213–Leu-229, and Gly-270–Phe-287. Solcar repeat units follow at residues Val-16–Trp-103, Pro-116–Thr-201, and Asp-206–Ala-295.

It belongs to the mitochondrial carrier (TC 2.A.29) family.

It is found in the mitochondrion inner membrane. Functionally, mitochondrial transporter that mediates uptake of thiamine pyrophosphate (ThPP) into mitochondria. This Scheffersomyces stipitis (strain ATCC 58785 / CBS 6054 / NBRC 10063 / NRRL Y-11545) (Yeast) protein is Mitochondrial thiamine pyrophosphate carrier 1 (TPC1).